A 582-amino-acid polypeptide reads, in one-letter code: Aspartate--tRNA ligase (582 aa).

An aspartate region spans residues 198–201 (QIFK). Residue Arg-220 participates in L-aspartate binding. ATP contacts are provided by residues 220-222 (RDE) and Gln-229. L-aspartate is bound at residue His-445. Glu-479 is an ATP binding site. An L-aspartate-binding site is contributed by Arg-486. 531 to 534 (GFDR) is a binding site for ATP.

This sequence belongs to the class-II aminoacyl-tRNA synthetase family. Type 1 subfamily. As to quaternary structure, homodimer.

It localises to the cytoplasm. It catalyses the reaction tRNA(Asp) + L-aspartate + ATP = L-aspartyl-tRNA(Asp) + AMP + diphosphate. Its function is as follows. Catalyzes the attachment of L-aspartate to tRNA(Asp) in a two-step reaction: L-aspartate is first activated by ATP to form Asp-AMP and then transferred to the acceptor end of tRNA(Asp). The sequence is that of Aspartate--tRNA ligase from Amoebophilus asiaticus (strain 5a2).